Reading from the N-terminus, the 1070-residue chain is DNA-directed RNA polymerase subunit beta (1070 aa).

This sequence belongs to the RNA polymerase beta chain family. In plastids the minimal PEP RNA polymerase catalytic core is composed of four subunits: alpha, beta, beta', and beta''. When a (nuclear-encoded) sigma factor is associated with the core the holoenzyme is formed, which can initiate transcription.

Its subcellular location is the plastid. It localises to the chloroplast. The enzyme catalyses RNA(n) + a ribonucleoside 5'-triphosphate = RNA(n+1) + diphosphate. Its function is as follows. DNA-dependent RNA polymerase catalyzes the transcription of DNA into RNA using the four ribonucleoside triphosphates as substrates. In Daucus carota (Wild carrot), this protein is DNA-directed RNA polymerase subunit beta.